We begin with the raw amino-acid sequence, 127 residues long: Putative iron-sulfur cluster insertion protein ErpA (127 aa).

Positions 1-14 (MNTPFNDGSGQTDP) are enriched in polar residues. A disordered region spans residues 1 to 20 (MNTPFNDGSGQTDPMTDIPT). Cys-55, Cys-119, and Cys-121 together coordinate iron-sulfur cluster.

Belongs to the HesB/IscA family. Homodimer. Iron-sulfur cluster is required as a cofactor.

Functionally, required for insertion of 4Fe-4S clusters. The protein is Putative iron-sulfur cluster insertion protein ErpA of Nitrosospira multiformis (strain ATCC 25196 / NCIMB 11849 / C 71).